The primary structure comprises 615 residues: Neurosecretory protein VGF (615 aa).

The first 22 residues, M1–A22, serve as a signal peptide directing secretion. Disordered regions lie at residues A22 to G201 and P218 to H257. Composition is skewed to pro residues over residues P25–L35 and P129–Q141. Positions E179 to R194 are enriched in low complexity. Q310 is modified (pyrrolidone carboxylic acid). Residues R342 to Q600 are disordered. Acidic residues predominate over residues V378–E394. Over residues A415–E433 the composition is skewed to basic and acidic residues. The residue at position 420 (S420) is a Phosphoserine; by FAM20C. Phosphothreonine; by FAM20C is present on T424. Residues G434–D448 show a composition bias toward acidic residues. The segment covering P487–A497 has biased composition (pro residues). P577 is subject to Proline amide. The span at P577 to E599 shows a compositional bias: basic and acidic residues.

Interacts with HSPA8 on cell membrane. Interacts with C3AR1. Interacts with C1QBP. Multiple peptides are derived from VGF, with activities in synaptic plasticity, antidepression, penile erection, autonomic activation, and increases in energy expenditure. Central and peripheral nervous systems, synthesized exclusively in neuronal and neuroendocrine cells.

It is found in the secreted. It localises to the cytoplasmic vesicle. The protein localises to the secretory vesicle. Secreted polyprotein that is packaged and proteolytically processed by prohormone convertases PCSK1 and PCSK2 in a cell-type-specific manner. VGF and peptides derived from its processing play many roles in neurogenesis and neuroplasticity associated with learning, memory, depression and chronic pain. Its function is as follows. Plays a role in the control of body fluid homeostasis by regulating vasopressin release. Suppresses presynaptic glutamatergic neurons connected to vasopressin neurons. In terms of biological role, plays a role in the control of body fluid homeostasis by regulating vasopressin release. Activates GABAergic interneurons which are inhibitory neurons of the nervous system and thereby suppresses presynaptic glutamatergic neurons. Also stimulates feeding behavior in an orexin-dependent manner in the hypothalamus. Functions as a positive regulator for the activation of orexin neurons resulting in elevated gastric acid secretion and gastric emptying. Functionally, secreted multifunctional neuropeptide that binds to different cell receptors and thereby plays multiple physiological roles including modulation of energy expenditure, pain, response to stress, gastric regulation, glucose homeostasis as well as lipolysis. Activates the G-protein-coupled receptor C3AR1 via a folding-upon-binding mechanism leading to enhanced lipolysis in adipocytes. Interacts with C1QBP receptor in macrophages and microglia causing increased levels of intracellular calcium and hypersensitivity. Plays a role in the regulation of memory formation and depression-related behaviors potentially by influencing synaptic plasticity and neurogenesis. Induces acute and transient activation of the NTRK2/TRKB receptor and subsequent CREB phosphorylation. Also induces insulin secretion in insulinoma cells by increasing intracellular calcium mobilization. Its function is as follows. Has bactericidal activity against M.luteus, and antifungal activity against P. Pastoris. This Homo sapiens (Human) protein is Neurosecretory protein VGF (VGF).